The primary structure comprises 251 residues: tRNA (guanine-N(1)-)-methyltransferase (251 aa).

Residues G117 and 137–142 contribute to the S-adenosyl-L-methionine site; that span reads IGDYVL.

It belongs to the RNA methyltransferase TrmD family. Homodimer.

It localises to the cytoplasm. The catalysed reaction is guanosine(37) in tRNA + S-adenosyl-L-methionine = N(1)-methylguanosine(37) in tRNA + S-adenosyl-L-homocysteine + H(+). Specifically methylates guanosine-37 in various tRNAs. The polypeptide is tRNA (guanine-N(1)-)-methyltransferase (Actinobacillus pleuropneumoniae serotype 5b (strain L20)).